A 604-amino-acid chain; its full sequence is Prostaglandin G/H synthase 2 (604 aa).

The signal sequence occupies residues 1–17; sequence MLARAGLLCASLSPPHA. The EGF-like domain maps to 18–55; sequence ANPCCSNPCQNQGVCMSIGFDQYMCDCSRTGFYGENCS. 4 disulfides stabilise this stretch: Cys-21/Cys-32, Cys-22/Cys-145, Cys-26/Cys-42, and Cys-44/Cys-54. Asn-53 is a glycosylation site (N-linked (GlcNAc...) asparagine). Arg-106 provides a ligand contact to substrate. N-linked (GlcNAc...) asparagine glycosylation is present at Asn-130. The active-site Proton acceptor is His-193. Residue Tyr-341 coordinates substrate. The For cyclooxygenase activity role is filled by Tyr-371. His-374 is a heme b binding site. Asn-396 carries an N-linked (GlcNAc...) asparagine glycan. Residue Cys-526 is modified to S-nitrosocysteine. Cys-555 and Cys-561 are oxidised to a cystine. N-linked (GlcNAc...) asparagine glycosylation occurs at Asn-580.

It belongs to the prostaglandin G/H synthase family. As to quaternary structure, homodimer. Heme b is required as a cofactor. Post-translationally, S-nitrosylation by NOS2 (iNOS) activates enzyme activity. S-nitrosylation may take place on different Cys residues in addition to Cys-526.

The protein resides in the microsome membrane. Its subcellular location is the endoplasmic reticulum membrane. The protein localises to the nucleus inner membrane. It is found in the nucleus outer membrane. The catalysed reaction is (5Z,8Z,11Z,14Z)-eicosatetraenoate + AH2 + 2 O2 = prostaglandin H2 + A + H2O. It catalyses the reaction (5Z,8Z,11Z,14Z)-eicosatetraenoate + 2 O2 = prostaglandin G2. It carries out the reaction prostaglandin G2 + AH2 = prostaglandin H2 + A + H2O. The enzyme catalyses (5Z,8Z,11Z,14Z,17Z)-eicosapentaenoate + 2 O2 = prostaglandin G3. The catalysed reaction is prostaglandin G3 + AH2 = prostaglandin H3 + A + H2O. It catalyses the reaction (8Z,11Z,14Z)-eicosatrienoate + 2 O2 = prostaglandin G1. It carries out the reaction prostaglandin G1 + AH2 = prostaglandin H1 + A + H2O. The enzyme catalyses 2-(5Z,8Z,11Z,14Z)-eicosatetraenoyl-sn-glycero-3-phosphoethanolamine + 2 O2 = 2-(prostaglandin G2)-sn-glycero-3-phosphoethanolamine. The catalysed reaction is 2-(prostaglandin G2)-sn-glycero-3-phosphoethanolamine + AH2 = 2-(prostaglandin H2)-sn-glycero-3-phosphoethanolamine + A + H2O. It catalyses the reaction 2-(5Z,8Z,11Z,14Z)-eicosatetraenoyl-sn-glycero-3-phosphocholine + 2 O2 = 2-(prostaglandin G2)-sn-glycero-3-phosphocholine. It carries out the reaction 2-(prostaglandin G2)-sn-glycero-3-phosphocholine + AH2 = 2-(prostaglandin H2)-sn-glycero-3-phosphocholine + A + H2O. The enzyme catalyses (15S)-hydroperoxy-(5Z,8Z,11Z,13E)-eicosatetraenoate + AH2 = (15S)-hydroxy-(5Z,8Z,11Z,13E)-eicosatetraenoate + A + H2O. The catalysed reaction is 2-(5Z,8Z,11Z,14Z)-eicosatetraenoyl-sn-glycero-3-phosphocholine + AH2 + O2 = 2-[(15S)-hydroxy-(5Z,8Z,11Z,13E)-eicosatetraenoyl]-sn-glycero-3-phosphocholine + A + H2O. It catalyses the reaction 2-(5Z,8Z,11Z,14Z)-eicosatetraenoyl-sn-glycero-3-phosphocholine + AH2 + O2 = 2-[(15R)-hydroxy-(5Z,8Z,11Z,13E)-eicosatetraenoyl]-sn-glycero-3-phosphocholine + A + H2O. It carries out the reaction 2-(5Z,8Z,11Z,14Z)-eicosatetraenoyl-sn-glycero-3-phosphocholine + AH2 + O2 = 2-[(11R)-hydroxy-(5Z,8Z,12E,14Z)-eicosatetraenoyl]-sn-glycero-3-phosphocholine + A + H2O. The enzyme catalyses (9Z,12Z)-octadecadienoate + AH2 + O2 = 9-hydroxy-(10E,12Z)-octadecadienoate + A + H2O. The catalysed reaction is (9Z,12Z)-octadecadienoate + AH2 + O2 = 13-hydroxy-(9Z,11E)-octadecadienoate + A + H2O. It catalyses the reaction (5Z,8Z,11Z,14Z)-eicosatetraenoate + AH2 + O2 = (15R)-hydroxy-(5Z,8Z,11Z,13E)-eicosatetraenoate + A + H2O. It carries out the reaction (5Z,8Z,11Z,14Z)-eicosatetraenoate + AH2 + O2 = (11R)-hydroxy-(5Z,8Z,12E,14Z)-eicosatetraenoate + A + H2O. The enzyme catalyses (5Z,8Z,11Z,14Z,17Z)-eicosapentaenoate + AH2 + O2 = (11R)-hydroxy-(5Z,8Z,12E,14Z,17Z)-eicosapentaenoate + A + H2O. The catalysed reaction is (5Z,8Z,11Z,14Z,17Z)-eicosapentaenoate + AH2 + O2 = (18S)-hydroxy-(5Z,8Z,11Z,14Z,16E)-eicosapentaenoate + A + H2O. It catalyses the reaction (5Z,8Z,11Z,14Z,17Z)-eicosapentaenoate + AH2 + O2 = (18R)-hydroxy-(5Z,8Z,11Z,14Z,16E)-eicosapentaenoate + A + H2O. It carries out the reaction (5Z,8Z,11Z,14Z,17Z)-eicosapentaenoate + AH2 + O2 = (15R)-hydroxy-(5Z,8Z,11Z,13E,17Z)-eicosapentaenoate + A + H2O. The enzyme catalyses (5Z,8Z,11Z,14Z,17Z)-eicosapentaenoate + AH2 + O2 = (15S)-hydroxy-(5Z,8Z,11Z,13E,17Z)-eicosapentaenoate + A + H2O. The catalysed reaction is (7Z,10Z,13Z,16Z,19Z)-docosapentaenoate + AH2 + O2 = 13R-hydroxy-(7Z,10Z,14E,16Z,19Z)-docosapentaenoate + A + H2O. It catalyses the reaction (4Z,7Z,10Z,13Z,16Z,19Z)-docosahexaenoate + AH2 + O2 = 13-hydroxy-(4Z,7Z,10Z,14E,16Z,19Z)-docosahexaenoate + A + H2O. It carries out the reaction (5S)-hydroxy-(6E,8Z,11Z,14Z)-eicosatetraenoate + AH2 + O2 = (5S,15R)-dihydroxy-(6E,8Z,11Z,13E)-eicosatetraenoate + A + H2O. The enzyme catalyses (4Z,7Z,10Z,13Z,16Z,19Z)-docosahexaenoate + AH2 + O2 = 17R-hydroxy-(4Z,7Z,10Z,13Z,15E,19Z)-docosahexaenoate + A + H2O. The catalysed reaction is (5S)-hydroxy-(6E,8Z,11Z,14Z)-eicosatetraenoate + AH2 + O2 = (5S,15S)-dihydroxy-(6E,8Z,11Z,13E)-eicosatetraenoate + A + H2O. It catalyses the reaction (5S)-hydroxy-(6E,8Z,11Z,14Z)-eicosatetraenoate + AH2 + O2 = (5S,11R)-dihydroxy-(6E,8Z,12E,14Z)-eicosatetraenoate + A + H2O. It carries out the reaction 2-(5Z,8Z,11Z,14Z-eicosatetraenoyl)-glycerol + 2 O2 = 2-glyceryl-prostaglandin G2. The enzyme catalyses 2-glyceryl-prostaglandin G2 + AH2 = 2-glyceryl-prostaglandin H2 + A + H2O. The catalysed reaction is (5Z,8Z,11Z,14Z)-eicosatetraenoate + O2 = (15R)-hydroperoxy-(5Z,8Z,11Z,13E)-eicosatetraenoate. It catalyses the reaction (5Z,8Z,11Z,14Z)-eicosatetraenoate + O2 = 11R-hydroperoxy-(5Z,8Z,12E,14Z)-eicosatetraenoate. It carries out the reaction (9Z,12Z)-octadecadienoate + AH2 + O2 = (9R)-hydroxy-(10E,12Z)-octadecadienoate + A + H2O. The enzyme catalyses (9Z,12Z)-octadecadienoate + AH2 + O2 = (9S)-hydroxy-(10E,12Z)-octadecadienoate + A + H2O. The catalysed reaction is (9Z,12Z)-octadecadienoate + AH2 + O2 = (13S)-hydroxy-(9Z,11E)-octadecadienoate + A + H2O. It catalyses the reaction (9Z,12Z)-octadecadienoate + AH2 + O2 = (13R)-hydroxy-(9Z,11E)-octadecadienoate + A + H2O. The protein operates within lipid metabolism; prostaglandin biosynthesis. Its function is as follows. Dual cyclooxygenase and peroxidase in the biosynthesis pathway of prostanoids, a class of C20 oxylipins mainly derived from arachidonate ((5Z,8Z,11Z,14Z)-eicosatetraenoate, AA, C20:4(n-6)), with a particular role in the inflammatory response. The cyclooxygenase activity oxygenates AA to the hydroperoxy endoperoxide prostaglandin G2 (PGG2), and the peroxidase activity reduces PGG2 to the hydroxy endoperoxide prostaglandin H2 (PGH2), the precursor of all 2-series prostaglandins and thromboxanes. This complex transformation is initiated by abstraction of hydrogen at carbon 13 (with S-stereochemistry), followed by insertion of molecular O2 to form the endoperoxide bridge between carbon 9 and 11 that defines prostaglandins. The insertion of a second molecule of O2 (bis-oxygenase activity) yields a hydroperoxy group in PGG2 that is then reduced to PGH2 by two electrons. Similarly catalyzes successive cyclooxygenation and peroxidation of dihomo-gamma-linoleate (DGLA, C20:3(n-6)) and eicosapentaenoate (EPA, C20:5(n-3)) to corresponding PGH1 and PGH3, the precursors of 1- and 3-series prostaglandins. In an alternative pathway of prostanoid biosynthesis, converts 2-arachidonoyl lysophopholipids to prostanoid lysophopholipids, which are then hydrolyzed by intracellular phospholipases to release free prostanoids. Metabolizes 2-arachidonoyl glycerol yielding the glyceryl ester of PGH2, a process that can contribute to pain response. Generates lipid mediators from n-3 and n-6 polyunsaturated fatty acids (PUFAs) via a lipoxygenase-type mechanism. Oxygenates PUFAs to hydroperoxy compounds and then reduces them to corresponding alcohols. Plays a role in the generation of resolution phase interaction products (resolvins) during both sterile and infectious inflammation. Metabolizes docosahexaenoate (DHA, C22:6(n-3)) to 17R-HDHA, a precursor of the D-series resolvins (RvDs). As a component of the biosynthetic pathway of E-series resolvins (RvEs), converts eicosapentaenoate (EPA, C20:5(n-3)) primarily to 18S-HEPE that is further metabolized by ALOX5 and LTA4H to generate 18S-RvE1 and 18S-RvE2. In vascular endothelial cells, converts docosapentaenoate (DPA, C22:5(n-3)) to 13R-HDPA, a precursor for 13-series resolvins (RvTs) shown to activate macrophage phagocytosis during bacterial infection. In activated leukocytes, contributes to oxygenation of hydroxyeicosatetraenoates (HETE) to diHETES (5,15-diHETE and 5,11-diHETE). Can also use linoleate (LA, (9Z,12Z)-octadecadienoate, C18:2(n-6)) as substrate and produce hydroxyoctadecadienoates (HODEs) in a regio- and stereospecific manner, being (9R)-HODE ((9R)-hydroxy-(10E,12Z)-octadecadienoate) and (13S)-HODE ((13S)-hydroxy-(9Z,11E)-octadecadienoate) its major products. During neuroinflammation, plays a role in neuronal secretion of specialized preresolving mediators (SPMs) 15R-lipoxin A4 that regulates phagocytic microglia. The sequence is that of Prostaglandin G/H synthase 2 (PTGS2) from Neovison vison (American mink).